Here is a 618-residue protein sequence, read N- to C-terminus: Nuclear cap-binding protein subunit 3 (618 aa).

The disordered stretch occupies residues M1–P53. Residues E20–V29 are compositionally biased toward acidic residues. Residues E117 to G178 are RNA recognition motif (RRM) domain. Positions W146–D149 match the WLDD motif; essential for 7-methylguanosine-containing mRNA cap binding motif. Disordered stretches follow at residues S170–P250, P342–V366, and Q426–S618. A compositionally biased stretch (basic and acidic residues) spans T174–S188. Residues D205–E223 are compositionally biased toward acidic residues. Positions P231–Q240 are enriched in polar residues. A compositionally biased stretch (acidic residues) spans E344–R365. A compositionally biased stretch (polar residues) spans S436–K450. Basic and acidic residues predominate over residues S451–Q468. A compositionally biased stretch (low complexity) spans S469 to K481. Composition is skewed to basic and acidic residues over residues S507–S517, P550–E562, and I583–L596. Over residues E609–S618 the composition is skewed to low complexity.

It belongs to the NCBP3 family. In terms of assembly, component of an alternative cap-binding complex (CBC) composed of NCBP1/CBP80 and NCBP3.

It localises to the nucleus. It is found in the cytoplasm. Associates with NCBP1/CBP80 to form an alternative cap-binding complex (CBC) which plays a key role in mRNA export. NCBP3 serves as adapter protein linking the capped RNAs (m7GpppG-capped RNA) to NCBP1/CBP80. Unlike the conventional CBC with NCBP2 which binds both small nuclear RNA (snRNA) and messenger (mRNA) and is involved in their export from the nucleus, the alternative CBC with NCBP3 does not bind snRNA and associates only with mRNA thereby playing a role in only mRNA export. The chain is Nuclear cap-binding protein subunit 3 from Xenopus laevis (African clawed frog).